Consider the following 633-residue polypeptide: Proline-rich receptor-like protein kinase PERK4 (633 aa).

Residues 1–29 (MASSPESAPPTNSTSSPSPPSNTNSTTSS) show a composition bias toward low complexity. The interval 1–145 (MASSPESAPP…GSSGGGGGGR (145 aa)) is disordered. Residues 1–151 (MASSPESAPP…GGGRSNTNTA (151 aa)) are Extracellular-facing. N12 and N24 each carry an N-linked (GlcNAc...) asparagine glycan. Pro residues-rich tracts occupy residues 30 to 41 (PPAPSPPSPTPP) and 48 to 65 (SPPPDSTSPPAPQAPNPP). An N-linked (GlcNAc...) asparagine glycan is attached at N66. Gly residues predominate over residues 77-90 (QGGGGERGNGGNNG). Over residues 106–135 (SRSNGDNGGSRSSPPGDTGGSRSDNPPSSG) the composition is skewed to low complexity. Gly residues predominate over residues 136 to 145 (GSSGGGGGGR). A helical membrane pass occupies residues 152-172 (IIVGVLVGAGLLMIVLIIVCL). Over 173–633 (RRKKKRKDSF…MGTKSPTPPK (461 aa)) the chain is Cytoplasmic. Residues 193–222 (QYYGNNNNNNASQNYPNWHLNSQGQNQQST) show a composition bias toward low complexity. Residues 193-255 (QYYGNNNNNN…SMYSGPSRPV (63 aa)) are disordered. A Phosphothreonine modification is found at T273. Residues 284–562 (FTDANLLGQG…VRALEGEVSL (279 aa)) form the Protein kinase domain. Residues 290-298 (LGQGGFGYV) and K312 contribute to the ATP site. At Y357 the chain carries Phosphotyrosine. D408 serves as the catalytic Proton acceptor. S441 is modified (phosphoserine). Phosphothreonine is present on residues T442 and T447. Y455 is modified (phosphotyrosine). Residues 608-619 (FPVSDCEGTSSN) are compositionally biased toward polar residues. Residues 608-633 (FPVSDCEGTSSNDSRDMGTKSPTPPK) form a disordered region.

It belongs to the protein kinase superfamily. Ser/Thr protein kinase family. Mostly expressed in inflorescence bolts. Also present in roots, stems, germinated seeds, cotyledons, pollen, stamen and stigma.

The protein localises to the cell membrane. The catalysed reaction is L-seryl-[protein] + ATP = O-phospho-L-seryl-[protein] + ADP + H(+). It carries out the reaction L-threonyl-[protein] + ATP = O-phospho-L-threonyl-[protein] + ADP + H(+). Activated by ABA and Ca(2+). Its function is as follows. Required during abscisic acid (ABA)-mediated activation of Ca(2+) channels. Regulates ABA signaling pathways. Modulates the expression of genes related to cell elongation and ABA signaling during root growth. This is Proline-rich receptor-like protein kinase PERK4 (PERK4) from Arabidopsis thaliana (Mouse-ear cress).